The chain runs to 123 residues: Small ribosomal subunit protein uS12 (123 aa).

Residues 1–25 (MPTINQLIRKRRKSSLARKKSPALQ) form a disordered region. The span at 8-21 (IRKRRKSSLARKKS) shows a compositional bias: basic residues. 3-methylthioaspartic acid is present on D89.

This sequence belongs to the universal ribosomal protein uS12 family. As to quaternary structure, part of the 30S ribosomal subunit. Contacts proteins S8 and S17. May interact with IF1 in the 30S initiation complex.

With S4 and S5 plays an important role in translational accuracy. Its function is as follows. Interacts with and stabilizes bases of the 16S rRNA that are involved in tRNA selection in the A site and with the mRNA backbone. Located at the interface of the 30S and 50S subunits, it traverses the body of the 30S subunit contacting proteins on the other side and probably holding the rRNA structure together. The combined cluster of proteins S8, S12 and S17 appears to hold together the shoulder and platform of the 30S subunit. The chain is Small ribosomal subunit protein uS12 from Chlamydia pneumoniae (Chlamydophila pneumoniae).